We begin with the raw amino-acid sequence, 923 residues long: Neuropilin-1 (923 aa).

An N-terminal signal peptide occupies residues 1–21 (MERGLPLLCATLALALALAGA). Residues 22–856 (FRSDKCGGTI…PGNVLKTLDP (835 aa)) lie on the Extracellular side of the membrane. 3 disulfides stabilise this stretch: C27-C54, C82-C104, and C147-C173. CUB domains lie at 27-141 (CGGT…YEIF) and 147-265 (CSQN…YSVL). Residue N150 is glycosylated (N-linked (GlcNAc...) asparagine). Residues E195, D209, and D250 each coordinate Ca(2+). C206 and C228 form a disulfide bridge. 3 N-linked (GlcNAc...) asparagine glycosylation sites follow: N261, N300, and N522. Disulfide bonds link C275–C424 and C431–C583. F5/8 type C domains lie at 275–424 (CMEA…VYGC) and 431–583 (CSGM…LLGC). The O-linked (Xyl...) (chondroitin sulfate) serine; alternate glycan is linked to S612. A glycan (O-linked (Xyl...) (heparan sulfate) serine; alternate) is linked at S612. Residues 645–811 (TYGFNCEFGW…NHISQEDCAK (167 aa)) enclose the MAM domain. Positions 820–845 (TEIKIDETGSTPGYEGEGEGDKNISR) are disordered. S829 carries an O-linked (Xyl...) (chondroitin sulfate) serine glycan. N-linked (GlcNAc...) asparagine glycosylation is present at N842. The helical transmembrane segment at 857–879 (ILITIIAMSALGVLLGAVCGVVL) threads the bilayer. At 880-923 (YCACWHNGMSERNLSALENYNFELVDGVKLKKDKLNPQSNYSEA) the chain is on the cytoplasmic side. S894 is subject to Phosphoserine.

This sequence belongs to the neuropilin family. Homodimer, and heterodimer with NRP2. Binds PLXNB1. Interacts with FER. Interacts with VEGFA. Interacts with ABCB8/MITOSUR in mitochondria. In terms of tissue distribution, nervous system.

It localises to the mitochondrion membrane. The protein localises to the cell membrane. The protein resides in the cytoplasm. Functionally, receptor involved in the development of the cardiovascular system, in angiogenesis, in the formation of certain neuronal circuits and in organogenesis outside the nervous system. Mediates the chemorepulsant activity of semaphorins. Recognizes a C-end rule (CendR) motif R/KXXR/K on its ligands which causes cellular internalization and vascular leakage. Binds to semaphorin 3A (SEMA3A), the PLGF-2 isoform of PGF, the VEGF165 isoform of VEGFA and VEGFB. Coexpression with KDR results in increased VEGF165 binding to KDR as well as increased chemotaxis. Regulates VEGF-induced angiogenesis. Binding to VEGFA initiates a signaling pathway needed for motor neuron axon guidance and cell body migration, including for the caudal migration of facial motor neurons from rhombomere 4 to rhombomere 6 during embryonic development. Regulates mitochondrial iron transport via interaction with ABCB8/MITOSUR. In Mus musculus (Mouse), this protein is Neuropilin-1.